The sequence spans 425 residues: GTPase Obg (425 aa).

One can recognise an Obg domain in the interval 1–158 (MFRDSAKIYV…YSLILEMKMI (158 aa)). The 172-residue stretch at 159 to 330 (ADVGLVGYPN…LLYAVSETLK (172 aa)) folds into the OBG-type G domain. Residues 165 to 172 (GYPNVGKS), 190 to 194 (FTTLV), 212 to 215 (DIPG), 282 to 285 (NKMD), and 311 to 313 (SAA) each bind GTP. Ser-172 and Thr-192 together coordinate Mg(2+). One can recognise an OCT domain in the interval 348 to 425 (YKVQEEKPFE…IYDTEFDYTR (78 aa)).

This sequence belongs to the TRAFAC class OBG-HflX-like GTPase superfamily. OBG GTPase family. Monomer. It depends on Mg(2+) as a cofactor.

It localises to the cytoplasm. Its function is as follows. An essential GTPase which binds GTP, GDP and possibly (p)ppGpp with moderate affinity, with high nucleotide exchange rates and a fairly low GTP hydrolysis rate. Plays a role in control of the cell cycle, stress response, ribosome biogenesis and in those bacteria that undergo differentiation, in morphogenesis control. This Ruminiclostridium cellulolyticum (strain ATCC 35319 / DSM 5812 / JCM 6584 / H10) (Clostridium cellulolyticum) protein is GTPase Obg.